Here is a 419-residue protein sequence, read N- to C-terminus: MASIFSKLLTGRNASLLFATMGTSVLTTGYLLNRQKVCAEVREQPRLFPPSADYPDLRKHNNCMAECLTPAIYAKLRNKVTPNGYTLDQCIQTGVDNPGHPFIKTVGMVAGDEESYEVFADLFDPVIKLRHNGYDPRVMKHTTDLDASKITQGQFDEHYVLSSRVRTGRSIRGLSLPPACTRAERREVENVAITALEGLKGDLAGRYYKLSEMTEQDQQRLIDDHFLFDKPVSPLLTCAGMARDWPDARGIWHNYDKTFLIWINEEDHTRVISMEKGGNMKRVFERFCRGLKEVERLIQERGWEFMWNERLGYILTCPSNLGTGLRAGVHVRIPKLSKDPRFSKILENLRLQKRGTGGVDTAAVADVYDISNIDRIGRSEVELVQIVIDGVNYLVDCEKKLERGQDIKVPPPLPQFGKK.

The N-terminal 39 residues, 1–39 (MASIFSKLLTGRNASLLFATMGTSVLTTGYLLNRQKVCA), are a transit peptide targeting the mitochondrion. The tract at residues 40–64 (EVREQPRLFPPSADYPDLRKHNNCM) is cardiolipin-binding. Positions 46 to 132 (RLFPPSADYP…FDPVIKLRHN (87 aa)) constitute a Phosphagen kinase N-terminal domain. In terms of domain architecture, Phosphagen kinase C-terminal spans 159–401 (YVLSSRVRTG…NYLVDCEKKL (243 aa)). Residues 162–166 (SSRVR) and histidine 225 contribute to the ATP site. Residue tyrosine 255 is modified to Phosphotyrosine. ATP-binding positions include arginine 270, arginine 326, 354-359 (RGTGGV), and aspartate 369. Phosphothreonine is present on threonine 356.

Belongs to the ATP:guanido phosphotransferase family. As to quaternary structure, exists as an octamer composed of four CKMT2 homodimers. Sarcomere-specific. Found only in heart and skeletal muscles.

Its subcellular location is the mitochondrion inner membrane. The catalysed reaction is creatine + ATP = N-phosphocreatine + ADP + H(+). Its function is as follows. Reversibly catalyzes the transfer of phosphate between ATP and various phosphogens (e.g. creatine phosphate). Creatine kinase isoenzymes play a central role in energy transduction in tissues with large, fluctuating energy demands, such as skeletal muscle, heart, brain and spermatozoa. This is Creatine kinase S-type, mitochondrial (CKMT2) from Homo sapiens (Human).